Consider the following 165-residue polypeptide: Large ribosomal subunit protein uL11 (165 aa).

Residue Ser38 is modified to Phosphoserine. Residue Lys40 forms a Glycyl lysine isopeptide (Lys-Gly) (interchain with G-Cter in SUMO2) linkage. A Glycyl lysine isopeptide (Lys-Gly) (interchain with G-Cter in ubiquitin) cross-link involves residue Lys48. The residue at position 54 (Lys54) is an N6-acetyllysine. Lys83 participates in a covalent cross-link: Glycyl lysine isopeptide (Lys-Gly) (interchain with G-Cter in ubiquitin). Ser165 is subject to Phosphoserine.

This sequence belongs to the universal ribosomal protein uL11 family. As to quaternary structure, component of the large ribosomal subunit. Mature ribosomes consist of a small (40S) and a large (60S) subunit. The 40S subunit contains about 33 different proteins and 1 molecule of RNA (18S). The 60S subunit contains about 49 different proteins and 3 molecules of RNA (28S, 5.8S and 5S). Post-translationally, ubiquitinated at Lys-48 and Lys-83 by RNF14 and RNF25 in response to ribosome collisions (ribosome stalling).

The protein localises to the cytoplasm. In terms of biological role, component of the large ribosomal subunit. The ribosome is a large ribonucleoprotein complex responsible for the synthesis of proteins in the cell. Binds directly to 26S ribosomal RNA. The sequence is that of Large ribosomal subunit protein uL11 (RPL12) from Bos taurus (Bovine).